The sequence spans 715 residues: Phosphatidylinositol 4-phosphate 5-kinase 6 (715 aa).

Residues 1-13 (MSVAHADDADDYS) show a composition bias toward basic and acidic residues. Positions 1–21 (MSVAHADDADDYSRPTGESYH) are disordered. MORN repeat units lie at residues 32–54 (YTGQ…DGCM), 55–77 (YVGD…SGAT), 78–100 (YEGD…SGDL), 101–123 (YRGS…NGDC), 124–146 (YDGE…NENH), 147–169 (YIGQ…NGNR), 170–192 (YDGS…DGSF), and 193–214 (YVGV…STSS). A disordered region spans residues 253-306 (GASEQSSSGNRTKNSERPRRRSVDGRVSNGEMELRSNGSGYLQVDDNAESTRSS). A compositionally biased stretch (polar residues) spans 255–264 (SEQSSSGNRT). Residues 265–276 (KNSERPRRRSVD) are compositionally biased toward basic and acidic residues. Positions 321–711 (TISKGHKNYE…RFRDFIFRVF (391 aa)) constitute a PIPK domain. The activation loop stretch occupies residues 671–692 (YDISKKLEHAYKSMQYDPTSIS).

It carries out the reaction a 1,2-diacyl-sn-glycero-3-phospho-(1D-myo-inositol 4-phosphate) + ATP = a 1,2-diacyl-sn-glycero-3-phospho-(1D-myo-inositol-4,5-bisphosphate) + ADP + H(+). This Arabidopsis thaliana (Mouse-ear cress) protein is Phosphatidylinositol 4-phosphate 5-kinase 6 (PIP5K6).